A 317-amino-acid chain; its full sequence is R-spondin-3 (317 aa).

Positions 1–20 are cleaved as a signal peptide; that stretch reads MQLQLISIVLILHFMEYTNC. FU repeat units lie at residues 34–86, 92–135, and 139–183; these read SGVS…GFYG, RNDC…GLVP, and KKEC…EFEP. 11 cysteine pairs are disulfide-bonded: cysteine 41–cysteine 48, cysteine 45–cysteine 54, cysteine 57–cysteine 76, cysteine 80–cysteine 95, cysteine 98–cysteine 105, cysteine 102–cysteine 111, cysteine 114–cysteine 125, cysteine 129–cysteine 189, cysteine 195–cysteine 237, cysteine 206–cysteine 213, and cysteine 246–cysteine 253. Asparagine 184 is a glycosylation site (N-linked (GlcNAc...) asparagine). Positions 194-254 constitute a TSP type-1 domain; that stretch reads HCEVSEWSEW…ECFVKKKRCK (61 aa). A compositionally biased stretch (basic residues) spans 251 to 268; it reads KRCKPPKGQRRGEKKKRF. Positions 251 to 317 are disordered; sequence KRCKPPKGQR…RDQSRDAGTV (67 aa). Residues 274-303 are compositionally biased toward basic and acidic residues; the sequence is VTAEARRERKREREKETIDREESENRNKTE. Asparagine 300 carries an N-linked (GlcNAc...) asparagine glycan.

The protein belongs to the R-spondin family. Binds heparin.

Its subcellular location is the secreted. In terms of biological role, activator of the canonical Wnt signaling pathway by acting as a ligand for lgr4-6 receptors, which acts as a key regulator of angiogenesis. Upon binding to lgr4-6 (lgr4, lgr5 or lgr6), lgr4-6 associate with phosphorylated lrp6 and frizzled receptors that are activated by extracellular Wnt receptors, triggering the canonical Wnt signaling pathway to increase expression of target genes. Acts both in the canonical. Wnt/beta-catenin-dependent pathway and in non-canonical Wnt signaling pathway. Acts as a key regulator of angiogenesis by controlling vascular stability and pruning: acts by activating the non-canonical Wnt signaling pathway in endothelial cells. Can also amplify Wnt signaling pathway independently of LGR4-6 receptors, possibly by acting as a direct antagonistic ligand to RNF43 and ZNRF3. This Danio rerio (Zebrafish) protein is R-spondin-3 (rspo3).